Consider the following 150-residue polypeptide: Cytosine deaminase (150 aa).

In terms of domain architecture, CMP/dCMP-type deaminase spans 3-121 (FDDKKGLQVA…KLLIENGVEV (119 aa)). Asn-44 contributes to the substrate binding site. Residue His-55 coordinates Zn(2+). Glu-57 (proton donor) is an active-site residue. Cys-84 and Cys-87 together coordinate Zn(2+). Asp-147 is a substrate binding site.

It belongs to the cytidine and deoxycytidylate deaminase family. In terms of assembly, homodimer. The cofactor is Zn(2+).

It localises to the cytoplasm. Its subcellular location is the nucleus. It carries out the reaction cytosine + H2O + H(+) = uracil + NH4(+). It functions in the pathway pyrimidine metabolism; UMP biosynthesis via salvage pathway; uracil from cytosine: step 1/1. Functionally, catalyzes the hydrolytic deamination of cytosine to uracil or 5-methylcytosine to thymine. Is involved in the pyrimidine salvage pathway, which allows the cell to utilize cytosine for pyrimidine nucleotide synthesis. The polypeptide is Cytosine deaminase (Candida albicans (strain SC5314 / ATCC MYA-2876) (Yeast)).